A 326-amino-acid chain; its full sequence is Pyruvate dehydrogenase E1 component subunit beta (326 aa).

Glutamate 60 lines the thiamine diphosphate pocket. K(+)-binding residues include isoleucine 113, alanine 161, isoleucine 162, and asparagine 166.

In terms of assembly, heterodimer of an alpha and a beta chain. Requires thiamine diphosphate as cofactor.

The protein resides in the plastid. It is found in the chloroplast. It carries out the reaction N(6)-[(R)-lipoyl]-L-lysyl-[protein] + pyruvate + H(+) = N(6)-[(R)-S(8)-acetyldihydrolipoyl]-L-lysyl-[protein] + CO2. Its function is as follows. The pyruvate dehydrogenase complex catalyzes the overall conversion of pyruvate to acetyl-CoA and CO(2). It contains multiple copies of three enzymatic components: pyruvate dehydrogenase (E1), dihydrolipoamide acetyltransferase (E2) and lipoamide dehydrogenase (E3). In Chaetosphaeridium globosum (Charophycean green alga), this protein is Pyruvate dehydrogenase E1 component subunit beta (pdhB).